We begin with the raw amino-acid sequence, 347 residues long: MSVMFDPQAAIYPFPPKPTPLSDDEKQFYREKIKRLLKERNAVMVAHYYTDPEIQQLAEETGGCISDSLEMARFGAKHAASTLLVAGVRFMGETAKILSPEKTILMPTLAAECSLDLGCPIDEFSAFCDAHPDRTVVVYANTSAAVKARADWVVTSSIAVELIEHLDSLGEKIIWAPDRHLGNYVQKQTGADVLCWQGACIVHDEFKTQALTRLKKIYPDAALLVHPESPQSIVEMADAVGSTSQLIKAAKTLPHRQLIVATDRGIFYKMQQAVPEKELLEAPTAGEGATCRSCAHCPWMAMNGLKAIAEGLEQGGAAHEIQVDAALREGALLPLNRMLDFAATLRA.

2 residues coordinate iminosuccinate: His47 and Ser68. Cys113 is a binding site for [4Fe-4S] cluster. Iminosuccinate-binding positions include 139-141 (YAN) and Ser156. A [4Fe-4S] cluster-binding site is contributed by Cys200. Iminosuccinate-binding positions include 226–228 (HPE) and Thr243. Residue Cys297 coordinates [4Fe-4S] cluster.

It belongs to the quinolinate synthase family. Type 1 subfamily. The cofactor is [4Fe-4S] cluster.

Its subcellular location is the cytoplasm. The enzyme catalyses iminosuccinate + dihydroxyacetone phosphate = quinolinate + phosphate + 2 H2O + H(+). It participates in cofactor biosynthesis; NAD(+) biosynthesis; quinolinate from iminoaspartate: step 1/1. Functionally, catalyzes the condensation of iminoaspartate with dihydroxyacetone phosphate to form quinolinate. The polypeptide is Quinolinate synthase (Salmonella choleraesuis (strain SC-B67)).